The following is a 127-amino-acid chain: Protein translocase subunit SecE (127 aa).

3 helical membrane-spanning segments follow: residues 16-36, 41-61, and 96-116; these read AMKW…NYLY, LPLR…VALL, and IVAA…GILV.

Belongs to the SecE/SEC61-gamma family. As to quaternary structure, component of the Sec protein translocase complex. Heterotrimer consisting of SecY, SecE and SecG subunits. The heterotrimers can form oligomers, although 1 heterotrimer is thought to be able to translocate proteins. Interacts with the ribosome. Interacts with SecDF, and other proteins may be involved. Interacts with SecA.

It is found in the cell inner membrane. In terms of biological role, essential subunit of the Sec protein translocation channel SecYEG. Clamps together the 2 halves of SecY. May contact the channel plug during translocation. The polypeptide is Protein translocase subunit SecE (Salmonella typhi).